We begin with the raw amino-acid sequence, 323 residues long: Aquaporin-4 (323 aa).

The Cytoplasmic segment spans residues 1–36; sequence MSDRPTARRWGKCGPLCTRENIMVAFKGVWTQAFWK. 2 S-palmitoyl cysteine lipidation sites follow: Cys13 and Cys17. The helical transmembrane segment at 37–57 threads the bilayer; the sequence is AVTAEFLAMLIFVLLSLGSTI. Over 58-69 the chain is Extracellular; it reads NWGGTEKPLPVD. Residues 70-89 form a helical membrane-spanning segment; that stretch reads MVLISLCFGLSIATMVQCFG. At 90–93 the chain is on the cytoplasmic side; that stretch reads HISG. The discontinuously helical intramembrane region spans 94-101; it reads GHINPAVT. The NPA 1 signature appears at 97–99; that stretch reads NPA. Residues 102–115 lie on the Cytoplasmic side of the membrane; sequence VAMVCTRKISIAKS. Residue Ser111 is modified to Phosphoserine; by PKG. Residues 116-136 traverse the membrane as a helical segment; that stretch reads VFYIAAQCLGAIIGAGILYLV. Over 137–155 the chain is Extracellular; it reads TPPSVVGGLGVTMVHGNLT. A glycan (N-linked (GlcNAc...) asparagine) is linked at Asn153. A helical membrane pass occupies residues 156–176; it reads AGHGLLVELIITFQLVFTIFA. At 177–184 the chain is on the cytoplasmic side; it reads SCDSKRTD. Ser180 carries the post-translational modification Phosphoserine; by PKC. Residues 185 to 205 traverse the membrane as a helical segment; it reads VTGSIALAIGFSVAIGHLFAI. Residue Asn206 is glycosylated (N-linked (GlcNAc...) asparagine). The Extracellular segment spans residues 206–208; the sequence is NYT. Residues 209–222 constitute an intramembrane region (discontinuously helical); the sequence is GASMNPARSFGPAV. The NPA 2 motif lies at 213–215; it reads NPA. The Extracellular segment spans residues 223 to 231; the sequence is IMGNWENHW. Residues 232-252 traverse the membrane as a helical segment; it reads IYWVGPIIGAVLAGGLYEYVF. At 253–323 the chain is on the cytoplasmic side; sequence CPDVEFKRRF…DQSGEVLSSV (71 aa). 2 positions are modified to phosphoserine: Ser276 and Ser285. The residue at position 289 (Thr289) is a Phosphothreonine. A Phosphoserine modification is found at Ser321.

This sequence belongs to the MIP/aquaporin (TC 1.A.8) family. As to quaternary structure, homotetramer. The tetramers can form oligomeric arrays in membranes. The size of the oligomers differs between tissues and is smaller in skeletal muscle than in brain. Interaction between AQP4 oligomeric arrays in close-by cells can contribute to cell-cell adhesion. Part of a complex containing MLC1, TRPV4, HEPACAM and ATP1B1. In terms of processing, phosphorylation by PKC at Ser-180 reduces conductance by 50%. Phosphorylation by PKG at Ser-111 in response to glutamate increases conductance by 40%. Post-translationally, isoform 2: Palmitoylated on its N-terminal region. Isoform 1: Not palmitoylated. In terms of tissue distribution, detected in skeletal muscle. Detected in stomach, along the glandular base region of the fundic gland (at protein level). Detected in brain, lung and skeletal muscle, and at much lower levels in heart and ovary.

The protein resides in the cell membrane. It is found in the basolateral cell membrane. The protein localises to the endosome membrane. It localises to the sarcolemma. Its subcellular location is the cell projection. It catalyses the reaction H2O(in) = H2O(out). Its function is as follows. Forms a water-specific channel. Plays an important role in brain water homeostasis. It is involved in glymphatic solute transport and is required for a normal rate of water exchange across the blood brain interface. Required for normal levels of cerebrospinal fluid influx into the brain cortex and parenchyma along paravascular spaces that surround penetrating arteries, and for normal drainage of interstitial fluid along paravenous drainage pathways. Thereby, it is required for normal clearance of solutes from the brain interstitial fluid, including soluble beta-amyloid peptides derived from APP. Plays a redundant role in urinary water homeostasis and urinary concentrating ability. This Homo sapiens (Human) protein is Aquaporin-4 (AQP4).